Consider the following 505-residue polypeptide: Glycerol kinase (505 aa).

Thr-12 provides a ligand contact to ADP. ATP is bound by residues Thr-12, Thr-13, and Ser-14. Thr-12 serves as a coordination point for sn-glycerol 3-phosphate. Arg-16 is a binding site for ADP. Positions 82, 83, 134, and 249 each coordinate sn-glycerol 3-phosphate. The glycerol site is built by Arg-82, Glu-83, Tyr-134, Asp-249, and Gln-250. 2 residues coordinate ADP: Thr-271 and Gly-315. 4 residues coordinate ATP: Thr-271, Gly-315, Gln-319, and Gly-416. ADP-binding residues include Gly-416 and Asn-420.

The protein belongs to the FGGY kinase family.

The enzyme catalyses glycerol + ATP = sn-glycerol 3-phosphate + ADP + H(+). It functions in the pathway polyol metabolism; glycerol degradation via glycerol kinase pathway; sn-glycerol 3-phosphate from glycerol: step 1/1. Inhibited by fructose 1,6-bisphosphate (FBP). Key enzyme in the regulation of glycerol uptake and metabolism. Catalyzes the phosphorylation of glycerol to yield sn-glycerol 3-phosphate. The protein is Glycerol kinase of Mycolicibacterium vanbaalenii (strain DSM 7251 / JCM 13017 / BCRC 16820 / KCTC 9966 / NRRL B-24157 / PYR-1) (Mycobacterium vanbaalenii).